The following is a 358-amino-acid chain: Low-specificity L-threonine aldolase 1 (358 aa).

Position 207 is an N6-(pyridoxal phosphate)lysine (Lys-207).

This sequence belongs to the threonine aldolase family. Pyridoxal 5'-phosphate is required as a cofactor. Expressed in root tips, seedlings, carpels and seeds.

It carries out the reaction L-threonine = acetaldehyde + glycine. The enzyme catalyses L-allo-threonine = acetaldehyde + glycine. The protein operates within amino-acid degradation; L-threonine degradation via aldolase pathway; acetaldehyde and glycine from L-threonine: step 1/1. Functionally, threonine aldolase involved in threonine degradation to glycine. May play a role in the removal of L-allo-threonine. The chain is Low-specificity L-threonine aldolase 1 from Arabidopsis thaliana (Mouse-ear cress).